The primary structure comprises 201 residues: Recombination protein RecR (201 aa).

The C4-type zinc-finger motif lies at 60–75 (CKSCGNIDTRNPCTVC). Residues 83 to 178 (SIIVVVADVA…KVTRLAHGVP (96 aa)) form the Toprim domain.

This sequence belongs to the RecR family.

Its function is as follows. May play a role in DNA repair. It seems to be involved in an RecBC-independent recombinational process of DNA repair. It may act with RecF and RecO. The protein is Recombination protein RecR of Rhodopseudomonas palustris (strain BisB5).